Consider the following 165-residue polypeptide: Transcription elongation factor GreA (165 aa).

Residues 55-78 (AAKEEQGKQELRVRQLTQLLESAK) adopt a coiled-coil conformation.

The protein belongs to the GreA/GreB family.

Its function is as follows. Necessary for efficient RNA polymerase transcription elongation past template-encoded arresting sites. The arresting sites in DNA have the property of trapping a certain fraction of elongating RNA polymerases that pass through, resulting in locked ternary complexes. Cleavage of the nascent transcript by cleavage factors such as GreA or GreB allows the resumption of elongation from the new 3'terminus. GreA releases sequences of 2 to 3 nucleotides. This is Transcription elongation factor GreA from Streptomyces coelicolor (strain ATCC BAA-471 / A3(2) / M145).